The following is a 327-amino-acid chain: Ribose operon repressor (327 aa).

Residues 1–56 (MTTIKQVALEAGVSKSTVSRFIAQNGYVSDEAREKIERAIKKLNFRPNLSAQSLKT) form the HTH lacI-type domain. The H-T-H motif DNA-binding region spans 4 to 23 (IKQVALEAGVSKSTVSRFIA).

Its function is as follows. Transcriptional repressor for the ribose rbsDACBK operon. The polypeptide is Ribose operon repressor (rbsR) (Lactococcus lactis subsp. lactis (strain IL1403) (Streptococcus lactis)).